The following is a 184-amino-acid chain: Probable chorismate pyruvate-lyase 1 (184 aa).

Substrate-binding residues include Arg70, Leu108, and Glu166.

This sequence belongs to the UbiC family.

The protein resides in the cytoplasm. It carries out the reaction chorismate = 4-hydroxybenzoate + pyruvate. It participates in cofactor biosynthesis; ubiquinone biosynthesis. Removes the pyruvyl group from chorismate, with concomitant aromatization of the ring, to provide 4-hydroxybenzoate (4HB) for the ubiquinone pathway. This chain is Probable chorismate pyruvate-lyase 1, found in Burkholderia pseudomallei (strain 1710b).